Reading from the N-terminus, the 652-residue chain is DNA ligase (652 aa).

NAD(+) contacts are provided by residues 29–33 (DSEYD), 78–79 (SL), and E107. Residue K109 is the N6-AMP-lysine intermediate of the active site. Residues R130, E164, K278, and K302 each contribute to the NAD(+) site. C395, C398, C413, and C418 together coordinate Zn(2+). Residues 577–652 (VADAALSGLT…VRDEAWLESL (76 aa)) enclose the BRCT domain.

The protein belongs to the NAD-dependent DNA ligase family. LigA subfamily. Requires Mg(2+) as cofactor. The cofactor is Mn(2+).

It carries out the reaction NAD(+) + (deoxyribonucleotide)n-3'-hydroxyl + 5'-phospho-(deoxyribonucleotide)m = (deoxyribonucleotide)n+m + AMP + beta-nicotinamide D-nucleotide.. DNA ligase that catalyzes the formation of phosphodiester linkages between 5'-phosphoryl and 3'-hydroxyl groups in double-stranded DNA using NAD as a coenzyme and as the energy source for the reaction. It is essential for DNA replication and repair of damaged DNA. This is DNA ligase from Streptococcus pneumoniae (strain P1031).